A 322-amino-acid polypeptide reads, in one-letter code: Serine/threonine-protein phosphatase PP1 isozyme 6 (322 aa).

Methionine 1 bears the N-acetylmethionine mark. Mn(2+)-binding residues include aspartate 61, histidine 63, aspartate 89, and asparagine 121. The active-site Proton donor is histidine 122. The Mn(2+) site is built by histidine 170 and histidine 245. The disordered stretch occupies residues 303-322 (GFNNNVPRPGTPPHKGGKGR).

Belongs to the PPP phosphatase family. PP-1 subfamily. The cofactor is Mn(2+). Strongly up-regulated within developing flowers, especially in the tapetum, the developing and mature pollen and in the ovaries.

The protein localises to the nucleus. The protein resides in the cytoplasm. It catalyses the reaction O-phospho-L-seryl-[protein] + H2O = L-seryl-[protein] + phosphate. The catalysed reaction is O-phospho-L-threonyl-[protein] + H2O = L-threonyl-[protein] + phosphate. Its activity is regulated as follows. Phosphatase activity is strongly reduced by the protein phosphatase inhibitor 2 (I-2). Functionally, serine/threonine-protein phosphatase that possesses phosphatase activity toward para-nitrophenyl phosphate (pNPP) in vitro. The chain is Serine/threonine-protein phosphatase PP1 isozyme 6 from Arabidopsis thaliana (Mouse-ear cress).